Reading from the N-terminus, the 297-residue chain is Light-independent protochlorophyllide reductase iron-sulfur ATP-binding protein (297 aa).

Residues 41-46 (GIGKST) and Lys-70 contribute to the ATP site. Ser-45 contributes to the Mg(2+) binding site. Residues Cys-126 and Cys-160 each contribute to the [4Fe-4S] cluster site. ATP is bound by residues 211–212 (NR) and 235–237 (PDL).

It belongs to the NifH/BchL/ChlL family. As to quaternary structure, homodimer. Protochlorophyllide reductase is composed of three subunits; BchL, BchN and BchB. The cofactor is [4Fe-4S] cluster.

It catalyses the reaction chlorophyllide a + oxidized 2[4Fe-4S]-[ferredoxin] + 2 ADP + 2 phosphate = protochlorophyllide a + reduced 2[4Fe-4S]-[ferredoxin] + 2 ATP + 2 H2O. Its pathway is porphyrin-containing compound metabolism; bacteriochlorophyll biosynthesis (light-independent). Its function is as follows. Component of the dark-operative protochlorophyllide reductase (DPOR) that uses Mg-ATP and reduced ferredoxin to reduce ring D of protochlorophyllide (Pchlide) to form chlorophyllide a (Chlide). This reaction is light-independent. The L component serves as a unique electron donor to the NB-component of the complex, and binds Mg-ATP. In Methylorubrum extorquens (strain PA1) (Methylobacterium extorquens), this protein is Light-independent protochlorophyllide reductase iron-sulfur ATP-binding protein.